We begin with the raw amino-acid sequence, 264 residues long: tRNA (guanine-N(1)-)-methyltransferase (264 aa).

S-adenosyl-L-methionine-binding positions include glycine 125 and 145 to 150 (LGDFVL).

It belongs to the RNA methyltransferase TrmD family. In terms of assembly, homodimer.

The protein localises to the cytoplasm. The enzyme catalyses guanosine(37) in tRNA + S-adenosyl-L-methionine = N(1)-methylguanosine(37) in tRNA + S-adenosyl-L-homocysteine + H(+). Functionally, specifically methylates guanosine-37 in various tRNAs. This Burkholderia mallei (strain NCTC 10247) protein is tRNA (guanine-N(1)-)-methyltransferase.